The sequence spans 196 residues: Orotate phosphoribosyltransferase (196 aa).

A 5-phospho-alpha-D-ribose 1-diphosphate-binding site is contributed by 117–125 (EDVVTTGLS). 2 residues coordinate orotate: T121 and R149.

This sequence belongs to the purine/pyrimidine phosphoribosyltransferase family. PyrE subfamily. In terms of assembly, homodimer. Mg(2+) serves as cofactor.

The enzyme catalyses orotidine 5'-phosphate + diphosphate = orotate + 5-phospho-alpha-D-ribose 1-diphosphate. It participates in pyrimidine metabolism; UMP biosynthesis via de novo pathway; UMP from orotate: step 1/2. Its function is as follows. Catalyzes the transfer of a ribosyl phosphate group from 5-phosphoribose 1-diphosphate to orotate, leading to the formation of orotidine monophosphate (OMP). This Sphingopyxis alaskensis (strain DSM 13593 / LMG 18877 / RB2256) (Sphingomonas alaskensis) protein is Orotate phosphoribosyltransferase.